Consider the following 330-residue polypeptide: Aspartate--ammonia ligase (330 aa).

The protein belongs to the class-II aminoacyl-tRNA synthetase family. AsnA subfamily.

The protein resides in the cytoplasm. It catalyses the reaction L-aspartate + NH4(+) + ATP = L-asparagine + AMP + diphosphate + H(+). The protein operates within amino-acid biosynthesis; L-asparagine biosynthesis; L-asparagine from L-aspartate (ammonia route): step 1/1. This is Aspartate--ammonia ligase from Photorhabdus laumondii subsp. laumondii (strain DSM 15139 / CIP 105565 / TT01) (Photorhabdus luminescens subsp. laumondii).